The following is a 118-amino-acid chain: Large ribosomal subunit protein uL18 (118 aa).

It belongs to the universal ribosomal protein uL18 family. As to quaternary structure, part of the 50S ribosomal subunit; part of the 5S rRNA/L5/L18/L25 subcomplex. Contacts the 5S and 23S rRNAs.

In terms of biological role, this is one of the proteins that bind and probably mediate the attachment of the 5S RNA into the large ribosomal subunit, where it forms part of the central protuberance. This Nitrosospira multiformis (strain ATCC 25196 / NCIMB 11849 / C 71) protein is Large ribosomal subunit protein uL18.